The following is a 266-amino-acid chain: Small ribosomal subunit protein eS1 (266 aa).

Residues 234–266 are disordered; it reads EGGTGTATKATGDDTGAKVERADGYEPPIQETV. Over residues 244–257 the composition is skewed to basic and acidic residues; sequence TGDDTGAKVERADG.

This sequence belongs to the eukaryotic ribosomal protein eS1 family. Component of the small ribosomal subunit. Mature ribosomes consist of a small (40S) and a large (60S) subunit. The 40S subunit contains about 33 different proteins and 1 molecule of RNA (18S). The 60S subunit contains about 49 different proteins and 3 molecules of RNA (28S, 5.8S and 5S). Part of the small subunit (SSU) processome, composed of more than 70 proteins and the RNA chaperone small nucleolar RNA (snoRNA) U3.

It is found in the cytoplasm. It localises to the nucleus. The protein localises to the nucleolus. In terms of biological role, component of the small ribosomal subunit. The ribosome is a large ribonucleoprotein complex responsible for the synthesis of proteins in the cell. Part of the small subunit (SSU) processome, first precursor of the small eukaryotic ribosomal subunit. During the assembly of the SSU processome in the nucleolus, many ribosome biogenesis factors, an RNA chaperone and ribosomal proteins associate with the nascent pre-rRNA and work in concert to generate RNA folding, modifications, rearrangements and cleavage as well as targeted degradation of pre-ribosomal RNA by the RNA exosome. May play a role during erythropoiesis. In Solea senegalensis (Senegalese sole), this protein is Small ribosomal subunit protein eS1 (rps3a).